The primary structure comprises 196 residues: GTP cyclohydrolase 1 (196 aa).

3 residues coordinate Zn(2+): C86, H89, and C157.

Belongs to the GTP cyclohydrolase I family. As to quaternary structure, toroid-shaped homodecamer, composed of two pentamers of five dimers.

It catalyses the reaction GTP + H2O = 7,8-dihydroneopterin 3'-triphosphate + formate + H(+). It functions in the pathway cofactor biosynthesis; 7,8-dihydroneopterin triphosphate biosynthesis; 7,8-dihydroneopterin triphosphate from GTP: step 1/1. This is GTP cyclohydrolase 1 from Parabacteroides distasonis (strain ATCC 8503 / DSM 20701 / CIP 104284 / JCM 5825 / NCTC 11152).